Here is a 260-residue protein sequence, read N- to C-terminus: Deoxyribonuclease-1 (260 aa).

Residue Asn-18 is glycosylated (N-linked (GlcNAc...) asparagine). Glu-78 is an active-site residue. An intrachain disulfide couples Cys-101 to Cys-104. His-134 is a catalytic residue. A disulfide bridge connects residues Cys-173 and Cys-209.

Belongs to the DNase I family. Ca(2+) is required as a cofactor. The cofactor is Mg(2+).

Its subcellular location is the secreted. The protein localises to the zymogen granule. The protein resides in the nucleus envelope. The catalysed reaction is Endonucleolytic cleavage to 5'-phosphodinucleotide and 5'-phosphooligonucleotide end-products.. Serum endocuclease secreted into body fluids by a wide variety of exocrine and endocrine organs. Expressed by non-hematopoietic tissues and preferentially cleaves protein-free DNA. Among other functions, seems to be involved in cell death by apoptosis. Binds specifically to G-actin and blocks actin polymerization. Together with DNASE1L3, plays a key role in degrading neutrophil extracellular traps (NETs). NETs are mainly composed of DNA fibers and are released by neutrophils to bind pathogens during inflammation. Degradation of intravascular NETs by DNASE1 and DNASE1L3 is required to prevent formation of clots that obstruct blood vessels and cause organ damage following inflammation. This Ovis aries (Sheep) protein is Deoxyribonuclease-1 (DNASE1).